Consider the following 258-residue polypeptide: Indole-3-glycerol phosphate synthase (258 aa).

The protein belongs to the TrpC family.

The enzyme catalyses 1-(2-carboxyphenylamino)-1-deoxy-D-ribulose 5-phosphate + H(+) = (1S,2R)-1-C-(indol-3-yl)glycerol 3-phosphate + CO2 + H2O. The protein operates within amino-acid biosynthesis; L-tryptophan biosynthesis; L-tryptophan from chorismate: step 4/5. The chain is Indole-3-glycerol phosphate synthase from Campylobacter jejuni subsp. jejuni serotype O:23/36 (strain 81-176).